Here is a 190-residue protein sequence, read N- to C-terminus: MDRTEQKSIIEGLLFVSGDEGIYPEQIAKVLEIEGNEVIDILEEMQKECEGAHRGLQIVQYAKVYRFATKKEHASYYQKLIDIPTAASLSQAALETLAIVAYRQPITRTEMEEIRGVKTDKALQTLVSHLLIKEMGRAEGPGRPILYGTTKEFLDTFGLKTLDDLPPLSEENEQMNEADLFFGSLQEISK.

The protein belongs to the ScpB family. As to quaternary structure, homodimer. Homodimerization may be required to stabilize the binding of ScpA to the Smc head domains. Component of a cohesin-like complex composed of ScpA, ScpB and the Smc homodimer, in which ScpA and ScpB bind to the head domain of Smc. The presence of the three proteins is required for the association of the complex with DNA.

The protein resides in the cytoplasm. Its function is as follows. Participates in chromosomal partition during cell division. May act via the formation of a condensin-like complex containing Smc and ScpA that pull DNA away from mid-cell into both cell halves. The polypeptide is Segregation and condensation protein B (Bacillus cereus (strain ZK / E33L)).